Here is a 332-residue protein sequence, read N- to C-terminus: Putative D-threonate 4-phosphate dehydrogenase (332 aa).

Histidine 140 and threonine 141 together coordinate substrate. Positions 170, 214, and 270 each coordinate a divalent metal cation. Residues lysine 278, asparagine 287, and arginine 296 each coordinate substrate.

It belongs to the PdxA family. PdxA2 subfamily. Homodimer. It depends on a divalent metal cation as a cofactor.

The catalysed reaction is 4-O-phospho-D-threonate + NAD(+) = dihydroxyacetone phosphate + CO2 + NADH. Functionally, catalyzes the NAD-dependent oxidation and subsequent decarboxylation of D-threonate 4-phosphate to produce dihydroxyacetone phosphate (DHAP). In Oceanobacillus iheyensis (strain DSM 14371 / CIP 107618 / JCM 11309 / KCTC 3954 / HTE831), this protein is Putative D-threonate 4-phosphate dehydrogenase.